We begin with the raw amino-acid sequence, 108 residues long: Large ribosomal subunit protein uL23 (108 aa).

This sequence belongs to the universal ribosomal protein uL23 family. In terms of assembly, part of the 50S ribosomal subunit. Contacts protein L29, and trigger factor when it is bound to the ribosome.

Functionally, one of the early assembly proteins it binds 23S rRNA. One of the proteins that surrounds the polypeptide exit tunnel on the outside of the ribosome. Forms the main docking site for trigger factor binding to the ribosome. This Polaromonas sp. (strain JS666 / ATCC BAA-500) protein is Large ribosomal subunit protein uL23.